Consider the following 108-residue polypeptide: Nucleoid-associated protein mma_2329 (108 aa).

It belongs to the YbaB/EbfC family. In terms of assembly, homodimer.

Its subcellular location is the cytoplasm. The protein localises to the nucleoid. Its function is as follows. Binds to DNA and alters its conformation. May be involved in regulation of gene expression, nucleoid organization and DNA protection. The protein is Nucleoid-associated protein mma_2329 of Janthinobacterium sp. (strain Marseille) (Minibacterium massiliensis).